A 330-amino-acid polypeptide reads, in one-letter code: Putative aminopeptidase (330 aa).

Residues His65 and Asp168 each coordinate a divalent metal cation. Glu198 serves as the catalytic Proton acceptor. Glu199, Asp221, and His307 together coordinate a divalent metal cation.

This sequence belongs to the peptidase M42 family. It depends on a divalent metal cation as a cofactor.

This Acetivibrio thermocellus (Hungateiclostridium thermocellum) protein is Putative aminopeptidase (celM).